A 183-amino-acid chain; its full sequence is MLYKSSDRPAHKVSMLLLCHALAIAVVQIVIFSESWAFAKNINFYNVRPPLDPTPFPNSFKCFTCENAGDNYNCNRWAEDKWCPQNTQYCLTVHHFTSHGRSTSITKKCASRSECHFVGCHHSRDSEHTECRSCCEGMICNVELPTNHTNAVFAVMHAQRTSGSSAPTLYLPVLAWVFVLPLL.

The first 39 residues, 1–39, serve as a signal peptide directing secretion; it reads MLYKSSDRPAHKVSMLLLCHALAIAVVQIVIFSESWAFA. Positions 60–151 constitute a UPAR/Ly6 domain; sequence FKCFTCENAG…VELPTNHTNA (92 aa). The interval 60–154 is sufficient for inhibiting alpha-7 nAChR currents; the sequence is FKCFTCENAG…PTNHTNAVFA (95 aa). Disulfide bonds link cysteine 62–cysteine 90, cysteine 65–cysteine 74, cysteine 83–cysteine 109, cysteine 115–cysteine 134, cysteine 120–cysteine 131, and cysteine 135–cysteine 140. Residue serine 164 is the site of GPI-anchor amidated serine attachment. A propeptide spans 165-183 (removed in mature form); sequence SAPTLYLPVLAWVFVLPLL.

It is found in the cell membrane. Likely acts as a modulator of nicotinic acetylcholine receptors (nAChRs) activity. In vitro acts on nAChRs in a subtype- and stoichiometry-dependent manner. Modulates specifically alpha-3(3):beta-4(2) nAChRs by enhancing the sensitivity to ACh, decreasing ACh-induced maximal current response and increasing the rate of desensitization to ACh; has no effect on alpha-7 homomeric nAChRs; modulates alpha-3(2):alpha-5:beta-4(2) nAChRs in the context of CHRNA5/alpha-5 variant Asn-398 but not its wild-type sequence. However, according to another report in vitro it can weakly inhibits alpha-7 nAChRs. This is Ly6/PLAUR domain-containing protein 6B (LYPD6B) from Homo sapiens (Human).